Consider the following 557-residue polypeptide: uncharacterized protein (557 aa).

The region spanning 7–206 is the DhaL domain; that stretch reads SSFIDMLRLG…FACFLEGMLS (200 aa).

This is an uncharacterized protein from Mycoplasma genitalium (strain ATCC 33530 / DSM 19775 / NCTC 10195 / G37) (Mycoplasmoides genitalium).